We begin with the raw amino-acid sequence, 295 residues long: Protoheme IX farnesyltransferase (295 aa).

Helical transmembrane passes span 24–44 (IMYLVVFTAVAGMVTAPGSMH), 45–65 (PFLALISLICVALGSGSAGAI), 94–114 (SALEFGITLGILSVFIMAIAV), 117–137 (ISAALLAVSILFYVFIYTIWL), 144–164 (NIVIGGAAGAFPPMIGWAAVT), 171–191 (SFILFLVIFMWTPPHFWALSL), 216–236 (KYILIYSVLLVLTSLLPALFL), 240–260 (LLYLSMATFEGCVFIWYAVSV), and 272–292 (MFSYSISYLFSLFASIIFCSI).

It belongs to the UbiA prenyltransferase family. Protoheme IX farnesyltransferase subfamily.

The protein resides in the cell membrane. The catalysed reaction is heme b + (2E,6E)-farnesyl diphosphate + H2O = Fe(II)-heme o + diphosphate. The protein operates within porphyrin-containing compound metabolism; heme O biosynthesis; heme O from protoheme: step 1/1. Converts heme B (protoheme IX) to heme O by substitution of the vinyl group on carbon 2 of heme B porphyrin ring with a hydroxyethyl farnesyl side group. The polypeptide is Protoheme IX farnesyltransferase (Wolbachia pipientis wMel).